The chain runs to 568 residues: Sulfite reductase [NADPH] hemoprotein beta-component (568 aa).

4 residues coordinate [4Fe-4S] cluster: Cys426, Cys432, Cys471, and Cys475. Residue Cys475 participates in siroheme binding.

Belongs to the nitrite and sulfite reductase 4Fe-4S domain family. Alpha(8)-beta(8). The alpha component is a flavoprotein, the beta component is a hemoprotein. It depends on siroheme as a cofactor. [4Fe-4S] cluster serves as cofactor.

It carries out the reaction hydrogen sulfide + 3 NADP(+) + 3 H2O = sulfite + 3 NADPH + 4 H(+). It functions in the pathway sulfur metabolism; hydrogen sulfide biosynthesis; hydrogen sulfide from sulfite (NADPH route): step 1/1. Functionally, component of the sulfite reductase complex that catalyzes the 6-electron reduction of sulfite to sulfide. This is one of several activities required for the biosynthesis of L-cysteine from sulfate. The sequence is that of Sulfite reductase [NADPH] hemoprotein beta-component from Xylella fastidiosa (strain 9a5c).